The sequence spans 178 residues: Mediator of RNA polymerase II transcription subunit 31 (178 aa).

Acidic residues predominate over residues 129 to 140; it reads EGQELEESEDEA. Residues 129–178 are disordered; it reads EGQELEESEDEADIRQKDTEDEDDEETMKKPDADTAEKNSTTSTVSKKEK. Residues 155-165 show a composition bias toward basic and acidic residues; it reads TMKKPDADTAE. The segment covering 166–178 has biased composition (polar residues); sequence KNSTTSTVSKKEK.

It belongs to the Mediator complex subunit 31 family. Component of the Mediator complex.

It is found in the nucleus. Functionally, component of the Mediator complex, a coactivator involved in the regulated transcription of nearly all RNA polymerase II-dependent genes. Mediator functions as a bridge to convey information from gene-specific regulatory proteins to the basal RNA polymerase II transcription machinery. Mediator is recruited to promoters by direct interactions with regulatory proteins and serves as a scaffold for the assembly of a functional preinitiation complex with RNA polymerase II and the general transcription factors. The protein is Mediator of RNA polymerase II transcription subunit 31 of Caenorhabditis elegans.